A 566-amino-acid chain; its full sequence is Arginine--tRNA ligase (566 aa).

A 'HIGH' region motif is present at residues 121 to 131 (ANPNGPFHIGH).

Belongs to the class-I aminoacyl-tRNA synthetase family.

The protein resides in the cytoplasm. The enzyme catalyses tRNA(Arg) + L-arginine + ATP = L-arginyl-tRNA(Arg) + AMP + diphosphate. The chain is Arginine--tRNA ligase from Methanococcus maripaludis (strain C7 / ATCC BAA-1331).